The sequence spans 128 residues: Large ribosomal subunit protein bL17 (128 aa).

It belongs to the bacterial ribosomal protein bL17 family. In terms of assembly, part of the 50S ribosomal subunit. Contacts protein L32.

In Klebsiella pneumoniae (strain 342), this protein is Large ribosomal subunit protein bL17.